We begin with the raw amino-acid sequence, 157 residues long: Transcription initiation factor IIA large subunit (157 aa).

Belongs to the TFIIA subunit 1 family. As to quaternary structure, TFIIA is a heterodimer of the large subunit and the small subunit gamma.

Its subcellular location is the nucleus. Functionally, TFIIA is a component of the transcription machinery of RNA polymerase II and plays an important role in transcriptional activation. This chain is Transcription initiation factor IIA large subunit (TOA1), found in Encephalitozoon cuniculi (strain GB-M1) (Microsporidian parasite).